The primary structure comprises 271 residues: Ribosomal RNA small subunit methyltransferase J (271 aa).

S-adenosyl-L-methionine is bound by residues 116-117 (RD), 132-133 (ER), 168-169 (SS), and Asp190.

It belongs to the methyltransferase superfamily. RsmJ family.

It localises to the cytoplasm. It catalyses the reaction guanosine(1516) in 16S rRNA + S-adenosyl-L-methionine = N(2)-methylguanosine(1516) in 16S rRNA + S-adenosyl-L-homocysteine + H(+). In terms of biological role, specifically methylates the guanosine in position 1516 of 16S rRNA. The protein is Ribosomal RNA small subunit methyltransferase J of Shewanella piezotolerans (strain WP3 / JCM 13877).